The following is a 417-amino-acid chain: Actin-related protein 10 (417 aa).

The protein belongs to the actin family. Subunit of dynactin, a multiprotein complex part of a tripartite complex with dynein and a adapter, such as BICDL1, BICD2 or HOOK3. The dynactin complex is built around ACTR1A/ACTB filament and consists of an actin-related filament composed of a shoulder domain, a pointed end and a barbed end. Its length is defined by its flexible shoulder domain. The soulder is composed of 2 DCTN1 subunits, 4 DCTN2 and 2 DCTN3. The 4 DCNT2 (via N-terminus) bind the ACTR1A filament and act as molecular rulers to determine the length. The pointed end is important for binding dynein-dynactin cargo adapters. Consists of 4 subunits: ACTR10, DCNT4, DCTN5 and DCTN6. The barbed end is composed of a CAPZA1:CAPZB heterodimers, which binds ACTR1A/ACTB filament and dynactin and stabilizes dynactin.

It localises to the cytoplasm. Its subcellular location is the cytoskeleton. Its function is as follows. Part of the dynactin complex that activates the molecular motor dynein for ultra-processive transport along microtubules. The protein is Actin-related protein 10 (ACTR10) of Homo sapiens (Human).